We begin with the raw amino-acid sequence, 429 residues long: Putative pentatricopeptide repeat-containing protein At1g03510 (429 aa).

PPR repeat units lie at residues 11 to 45, 47 to 81, 82 to 112, 113 to 147, 148 to 180, 181 to 215, 216 to 246, 247 to 281, 282 to 312, and 318 to 348; these read KLIS…FALP, DAHV…NFLS, NPFV…IPQR, NAVV…PNES, SFNA…RFKP, NLIT…LIEP, HPQL…MEDR, DVVA…KVTP, DDIA…MQGD, and SKDH…MPEK. Residues 353–428 form a type E motif region; that stretch reads TWGALLGACR…SPGSSWCLFK (76 aa).

The protein belongs to the PPR family. PCMP-E subfamily.

This Arabidopsis thaliana (Mouse-ear cress) protein is Putative pentatricopeptide repeat-containing protein At1g03510 (PCMP-E3).